Here is a 176-residue protein sequence, read N- to C-terminus: HTH-type transcriptional regulator DctR (176 aa).

The HTH luxR-type domain occupies 109–174; it reads VPEANVSLSR…ELVRHQHIDY (66 aa). The segment at residues 133-152 is a DNA-binding region (H-T-H motif); sequence TEDILEKLKISLKTFYCHKH.

Its function is as follows. May act as a transcriptional regulator of dctA. Could be involved in the regulation of the genes coding for the type III secretion system in enterohaemorragic strains. This is HTH-type transcriptional regulator DctR (dctR) from Escherichia coli O157:H7.